The sequence spans 145 residues: Fluoride-specific ion channel FluC 2 (145 aa).

4 helical membrane-spanning segments follow: residues 16–36 (MLLVFVGGALGTAARALLSAA), 42–62 (VISVITFVINVIGAFVLGWLL), 80–100 (LFAGTGVLGGFTTYSAFAVDT), and 113–133 (ILYAAATIAIGAAAYLAGIAL). Residues Gly88 and Thr91 each coordinate Na(+).

It belongs to the fluoride channel Fluc/FEX (TC 1.A.43) family.

The protein resides in the cell membrane. The enzyme catalyses fluoride(in) = fluoride(out). Na(+) is not transported, but it plays an essential structural role and its presence is essential for fluoride channel function. Functionally, fluoride-specific ion channel. Important for reducing fluoride concentration in the cell, thus reducing its toxicity. This Leifsonia xyli subsp. xyli (strain CTCB07) protein is Fluoride-specific ion channel FluC 2.